The chain runs to 81 residues: Short neurotoxin 2 (81 aa).

The first 21 residues, 1–21 (MKTLLLTLVVVTIVCLDLGYT), serve as a signal peptide directing secretion. Cystine bridges form between C24/C43, C38/C60, C62/C73, and C74/C79.

Belongs to the three-finger toxin family. Short-chain subfamily. Type I alpha-neurotoxin sub-subfamily. As to expression, expressed by the venom gland.

The protein localises to the secreted. Binds to muscle nicotinic acetylcholine receptor (nAChR) and inhibit acetylcholine from binding to the receptor, thereby impairing neuromuscular transmission. In Hydrophis peronii (Spiny-headed seasnake), this protein is Short neurotoxin 2.